The chain runs to 109 residues: Putative double-stranded DNA mimic protein YciU (109 aa).

It belongs to the putative dsDNA mimic protein family.

Its function is as follows. May act as a double-stranded DNA (dsDNA) mimic. Probably regulates the activity of a dsDNA-binding protein. The sequence is that of Putative double-stranded DNA mimic protein YciU from Salmonella choleraesuis (strain SC-B67).